The sequence spans 294 residues: 4-hydroxy-tetrahydrodipicolinate synthase (294 aa).

Residue Thr-48 participates in pyruvate binding. Tyr-136 acts as the Proton donor/acceptor in catalysis. Lys-164 (schiff-base intermediate with substrate) is an active-site residue. Val-206 provides a ligand contact to pyruvate.

This sequence belongs to the DapA family. As to quaternary structure, homotetramer; dimer of dimers.

The protein resides in the cytoplasm. The enzyme catalyses L-aspartate 4-semialdehyde + pyruvate = (2S,4S)-4-hydroxy-2,3,4,5-tetrahydrodipicolinate + H2O + H(+). It functions in the pathway amino-acid biosynthesis; L-lysine biosynthesis via DAP pathway; (S)-tetrahydrodipicolinate from L-aspartate: step 3/4. Its function is as follows. Catalyzes the condensation of (S)-aspartate-beta-semialdehyde [(S)-ASA] and pyruvate to 4-hydroxy-tetrahydrodipicolinate (HTPA). This Desulforudis audaxviator (strain MP104C) protein is 4-hydroxy-tetrahydrodipicolinate synthase.